The primary structure comprises 487 residues: 3-octaprenyl-4-hydroxybenzoate carboxy-lyase (487 aa).

Residue N172 participates in Mn(2+) binding. Residues 175–177 (IYR), 189–191 (RWL), and 194–195 (RG) contribute to the prenylated FMN site. Position 238 (E238) interacts with Mn(2+). Catalysis depends on D287, which acts as the Proton donor.

This sequence belongs to the UbiD family. In terms of assembly, homohexamer. It depends on prenylated FMN as a cofactor. The cofactor is Mn(2+).

The protein localises to the cell membrane. It carries out the reaction a 4-hydroxy-3-(all-trans-polyprenyl)benzoate + H(+) = a 2-(all-trans-polyprenyl)phenol + CO2. It functions in the pathway cofactor biosynthesis; ubiquinone biosynthesis. Functionally, catalyzes the decarboxylation of 3-octaprenyl-4-hydroxy benzoate to 2-octaprenylphenol, an intermediate step in ubiquinone biosynthesis. The protein is 3-octaprenyl-4-hydroxybenzoate carboxy-lyase of Nitrosomonas europaea (strain ATCC 19718 / CIP 103999 / KCTC 2705 / NBRC 14298).